Consider the following 31-residue polypeptide: Gamma-conotoxin-like As7a (31 aa).

3 disulfides stabilise this stretch: C2–C16, C9–C20, and C15–C31. E14 carries the post-translational modification 4-carboxyglutamate.

This sequence belongs to the conotoxin O1 superfamily. In terms of tissue distribution, expressed by the venom duct.

It is found in the secreted. Its function is as follows. Gamma-conotoxins may act on voltage-gated non-specific cation pacemaker channels (HCN). Elicits toxic effects in the freshwater snail Pomacea paludosa after intramuscular injection, but it has no effect when injected intracerebrally into mice. The sequence is that of Gamma-conotoxin-like As7a from Conus cancellatus (Cancellate cone).